Consider the following 291-residue polypeptide: ATP synthase gamma chain (291 aa).

This sequence belongs to the ATPase gamma chain family. As to quaternary structure, F-type ATPases have 2 components, CF(1) - the catalytic core - and CF(0) - the membrane proton channel. CF(1) has five subunits: alpha(3), beta(3), gamma(1), delta(1), epsilon(1). CF(0) has three main subunits: a, b and c.

It is found in the cell inner membrane. Produces ATP from ADP in the presence of a proton gradient across the membrane. The gamma chain is believed to be important in regulating ATPase activity and the flow of protons through the CF(0) complex. The sequence is that of ATP synthase gamma chain from Ruegeria pomeroyi (strain ATCC 700808 / DSM 15171 / DSS-3) (Silicibacter pomeroyi).